A 113-amino-acid polypeptide reads, in one-letter code: Large ribosomal subunit protein bL19 (113 aa).

It belongs to the bacterial ribosomal protein bL19 family.

Functionally, this protein is located at the 30S-50S ribosomal subunit interface and may play a role in the structure and function of the aminoacyl-tRNA binding site. The polypeptide is Large ribosomal subunit protein bL19 (Corynebacterium glutamicum (strain R)).